The sequence spans 130 residues: MIGNWNYGTGRRKSAVARVFIKAGKGDIVVNGKPIADYFSRETSLMIVRQPLELTNHGTTFDIKVNVSGGGETGQAGAVRHGITRALMDYDATLKPALSNAGFVTRDAREVERKKVGFHKARRRKQFSKR.

This sequence belongs to the universal ribosomal protein uS9 family.

In Paraburkholderia phymatum (strain DSM 17167 / CIP 108236 / LMG 21445 / STM815) (Burkholderia phymatum), this protein is Small ribosomal subunit protein uS9.